Consider the following 210-residue polypeptide: Proteasome subunit beta (210 aa).

Residues 1 to 9 (MDNDKYLKG) constitute a propeptide, removed in mature form; by autocatalysis. Thr10 acts as the Nucleophile in catalysis.

The protein belongs to the peptidase T1B family. In terms of assembly, the 20S proteasome core is composed of 14 alpha and 14 beta subunits that assemble into four stacked heptameric rings, resulting in a barrel-shaped structure. The two inner rings, each composed of seven catalytic beta subunits, are sandwiched by two outer rings, each composed of seven alpha subunits. The catalytic chamber with the active sites is on the inside of the barrel. Has a gated structure, the ends of the cylinder being occluded by the N-termini of the alpha-subunits. Is capped at one or both ends by the proteasome regulatory ATPase, PAN.

The protein localises to the cytoplasm. The catalysed reaction is Cleavage of peptide bonds with very broad specificity.. Its activity is regulated as follows. The formation of the proteasomal ATPase PAN-20S proteasome complex, via the docking of the C-termini of PAN into the intersubunit pockets in the alpha-rings, triggers opening of the gate for substrate entry. Interconversion between the open-gate and close-gate conformations leads to a dynamic regulation of the 20S proteasome proteolysis activity. Component of the proteasome core, a large protease complex with broad specificity involved in protein degradation. The polypeptide is Proteasome subunit beta (Methanosarcina thermophila).